The primary structure comprises 253 residues: MEHQTTPKQKTKEKSKGNKTKFVGVRQRPSGKWVAEIKDTTQKIRMWLGTFETAEEAARAYDEAACLLRGSNTRTNFANHFPNNSQLSLKIRNLLHQKQSMKQQQQQQHKPVSSLTDCNINYISTATSLTTTTTTTTTTAIPLNNVYRPDSSVIGQPETEGLQLPYSWPLVSGFNHQIPLAQAGGETHGHLNDHYSTDQHLGLAEIERQISASLYAMNGANSYYDNMNAEYAIFDPTDPIWDLPSLSQLFCPT.

The AP2/ERF DNA-binding region spans 21 to 78 (KFVGVRQRPSGKWVAEIKDTTQKIRMWLGTFETAEEAARAYDEAACLLRGSNTRTNFA).

It belongs to the AP2/ERF transcription factor family. ERF subfamily.

It is found in the nucleus. Probably acts as a transcriptional activator. Binds to the GCC-box pathogenesis-related promoter element. May be involved in the regulation of gene expression by stress factors and by components of stress signal transduction pathways. This is Ethylene-responsive transcription factor RAP2-11 (RAP2-11) from Arabidopsis thaliana (Mouse-ear cress).